A 688-amino-acid chain; its full sequence is Coiled-coil domain-containing protein 157 (688 aa).

A compositionally biased stretch (polar residues) spans 143–153; it reads ANQGETLTSKP. 5 disordered regions span residues 143–162, 168–189, 322–341, 366–385, and 592–688; these read ANQG…PAGS, AQLV…ERDS, QAAR…QWER, QQRE…QAEA, and QGAE…ERPT. The stretch at 288–572 forms a coiled coil; sequence KLVGLLRAQL…LSKIREVAQQ (285 aa). The span at 369 to 382 shows a compositional bias: polar residues; that stretch reads ESTQAVESKAQQLQ. Over residues 671 to 680 the composition is skewed to low complexity; the sequence is SPSSGRASPA.

This chain is Coiled-coil domain-containing protein 157 (CCDC157), found in Bos taurus (Bovine).